The sequence spans 307 residues: Agmatinase (307 aa).

Histidine 126, aspartate 149, histidine 151, aspartate 153, aspartate 230, and aspartate 232 together coordinate Mn(2+).

This sequence belongs to the arginase family. Agmatinase subfamily. Mn(2+) is required as a cofactor.

It carries out the reaction agmatine + H2O = urea + putrescine. It participates in amine and polyamine biosynthesis; putrescine biosynthesis via agmatine pathway; putrescine from agmatine: step 1/1. Functionally, catalyzes the formation of putrescine from agmatine. The protein is Agmatinase of Sodalis glossinidius (strain morsitans).